A 1475-amino-acid chain; its full sequence is ABC transporter G family member 15 (1475 aa).

Residues 1–10 are compositionally biased toward basic and acidic residues; that stretch reads MDSNENKKNG. Disordered stretches follow at residues 1 to 40 and 75 to 94; these read MDSNENKKNGGDSLELNIINNNNDNNNNNDNNNNSTEEHI and NIKNDIEAPPSGEFEPGGGA. The span at 17 to 34 shows a compositional bias: low complexity; sequence NIINNNNDNNNNNDNNNN. A coiled-coil region spans residues 25–67; sequence NNNNNDNNNNSTEEHIESVEQSIKEFNNVANELETEFRDYLVE. The region spanning 155 to 404 is the ABC transporter 1 domain; the sequence is LNVKNWFKKS…FIDMGFECEP (250 aa). The region spanning 507–753 is the ABC transmembrane type-2 1 domain; sequence WGDKFSLISR…FTGERYLEKS (247 aa). Helical transmembrane passes span 596–616, 623–641, 653–673, 680–699, and 770–790; these read IPIIMIQVFLFSIVTYFMFGL, FFINCFTLIGFTLATNNLY, IGQNIMNVLFLTMMTFTSYII, VWFGWYHYCNPFSFAFRALM, and ICIVYGFWILFIICNCIVLNI. An ABC transporter 2 domain is found at 842–1087; it reads FTWQHMYYSV…LTSYFQRHGV (246 aa). Residue 879 to 886 coordinates ATP; that stretch reads GSSGAGKT. Transmembrane regions (helical) follow at residues 1180 to 1200, 1216 to 1236, 1256 to 1276, 1293 to 1313, 1323 to 1343, and 1449 to 1469; these read GYSYGTFIQSALVGLINGWTF, FIFNVTMLGILLMFLVLPQFI, FALSIIVVELPFVLVSGTIFF, FFFWLIFMLFLFYCVGFGQAI, ALNLLPVLIIFLFLFCGVLVI, and FGIIAGYFVLNIFLVVLFVFL. The ABC transmembrane type-2 2 domain occupies 1180–1404; it reads GYSYGTFIQS…TCSDYAFEFL (225 aa).

It belongs to the ABC transporter superfamily. ABCG family. PDR (TC 3.A.1.205) subfamily.

It localises to the membrane. The protein is ABC transporter G family member 15 (abcG15) of Dictyostelium discoideum (Social amoeba).